Reading from the N-terminus, the 43-residue chain is Protein PsbN (43 aa).

The chain crosses the membrane as a helical span at residues Leu7–Phe27.

The protein belongs to the PsbN family.

The protein localises to the plastid. It localises to the chloroplast thylakoid membrane. Functionally, may play a role in photosystem I and II biogenesis. The protein is Protein PsbN of Guillardia theta (Cryptophyte).